The sequence spans 82 residues: Small ribosomal subunit protein uS17 (82 aa).

It belongs to the universal ribosomal protein uS17 family. In terms of assembly, part of the 30S ribosomal subunit.

Its function is as follows. One of the primary rRNA binding proteins, it binds specifically to the 5'-end of 16S ribosomal RNA. In Shewanella sp. (strain MR-7), this protein is Small ribosomal subunit protein uS17.